The sequence spans 904 residues: Translation initiation factor IF-2 (904 aa).

Disordered regions lie at residues 102-122 (TYVK…PDEE), 134-252 (RQRN…MVAG), and 267-316 (HLSA…ERPT). Over residues 134–177 (RQRNLEEQQRLAESDRVRDEAIQRKREEEQAAKDRAEAERKAAE) the composition is skewed to basic and acidic residues. Residues 178–230 (EAAAAASAPAPVADAPKPSAAAPAARLPSSPSSAPRAARPAGASPASRPAAPA) are compositionally biased toward low complexity. Positions 403–572 (SRPPVVTIMG…SLQAEVLELK (170 aa)) constitute a tr-type G domain. The G1 stretch occupies residues 412–419 (GHVDHGKT). Residue 412-419 (GHVDHGKT) participates in GTP binding. The segment at 437 to 441 (GITQH) is G2. The G3 stretch occupies residues 458-461 (DTPG). GTP is bound by residues 458 to 462 (DTPGH) and 512 to 515 (NKID). A G4 region spans residues 512–515 (NKID). A G5 region spans residues 548–550 (SAK).

This sequence belongs to the TRAFAC class translation factor GTPase superfamily. Classic translation factor GTPase family. IF-2 subfamily.

It is found in the cytoplasm. Its function is as follows. One of the essential components for the initiation of protein synthesis. Protects formylmethionyl-tRNA from spontaneous hydrolysis and promotes its binding to the 30S ribosomal subunits. Also involved in the hydrolysis of GTP during the formation of the 70S ribosomal complex. This chain is Translation initiation factor IF-2, found in Xanthomonas axonopodis pv. citri (strain 306).